We begin with the raw amino-acid sequence, 103 residues long: Non-histone chromosomal protein 6 (103 aa).

2 disordered regions span residues 1-30 and 70-103; these read MPKA…KRGL and KQRA…EESS. The segment at residues 26 to 94 is a DNA-binding region (HMG box); the sequence is PKRGLSAYMF…RYEDEKQAYN (69 aa). Positions 70–91 are enriched in basic and acidic residues; the sequence is KQRAPYEAKAAADKKRYEDEKQ.

The protein belongs to the NHP6 family. As to quaternary structure, weakly associates with the stable heterodimer of ctc-1/pob3 and ctc-2/spt16 to form the FACT complex.

Its subcellular location is the nucleus. The protein resides in the chromosome. In terms of biological role, DNA-binding protein that induces severe bending of DNA. Required for DNA-binding by the FACT complex, a general chromatin factor that acts to reorganize nucleosomes. The FACT complex is involved in multiple processes that require DNA as a template such as mRNA elongation, DNA replication and DNA repair. Also augments the fidelity of transcription by RNA polymerase III independently of any role in the FACT complex. The sequence is that of Non-histone chromosomal protein 6 (nhp-1) from Neurospora crassa (strain ATCC 24698 / 74-OR23-1A / CBS 708.71 / DSM 1257 / FGSC 987).